The chain runs to 175 residues: Succinate dehydrogenase assembly factor 2, mitochondrial (175 aa).

The disordered stretch occupies residues 42–71 (PFSDPELAHANNSLPSNSEEWPLPEPLDRT). The span at 51–60 (ANNSLPSNSE) shows a compositional bias: polar residues.

The protein belongs to the SDHAF2 family. As to quaternary structure, interacts with the flavoprotein subunit within the SDH catalytic dimer.

The protein resides in the mitochondrion matrix. In terms of biological role, plays an essential role in the assembly of succinate dehydrogenase (SDH), an enzyme complex (also referred to as respiratory complex II) that is a component of both the tricarboxylic acid (TCA) cycle and the mitochondrial electron transport chain, and which couples the oxidation of succinate to fumarate with the reduction of ubiquinone (coenzyme Q) to ubiquinol. Required for flavinylation (covalent attachment of FAD) of the flavoprotein subunit of the SDH catalytic dimer. The chain is Succinate dehydrogenase assembly factor 2, mitochondrial from Cryptococcus neoformans var. neoformans serotype D (strain B-3501A) (Filobasidiella neoformans).